A 62-amino-acid polypeptide reads, in one-letter code: Chromatin protein Cren7 2 (62 aa).

The protein belongs to the Cren7 family. Monomer. In terms of processing, methylated at multiple sites, to varying extents.

The protein localises to the chromosome. It is found in the cytoplasm. Its function is as follows. A chromatin protein, binds double-stranded DNA without sequence specificity. Constrains negative DNA supercoils. In Hyperthermus butylicus (strain DSM 5456 / JCM 9403 / PLM1-5), this protein is Chromatin protein Cren7 2 (cren7-2).